The primary structure comprises 293 residues: Acetyl-coenzyme A carboxylase carboxyl transferase subunit beta (293 aa).

In terms of domain architecture, CoA carboxyltransferase N-terminal spans 29-293; the sequence is LWRKCPRCEG…MGWPPLALDD (265 aa). The Zn(2+) site is built by Cys-33, Cys-36, Cys-52, and Cys-55. The C4-type zinc-finger motif lies at 33 to 55; it reads CPRCEGVVYRPELDRNMDVCPKC.

It belongs to the AccD/PCCB family. Acetyl-CoA carboxylase is a heterohexamer composed of biotin carboxyl carrier protein (AccB), biotin carboxylase (AccC) and two subunits each of ACCase subunit alpha (AccA) and ACCase subunit beta (AccD). Requires Zn(2+) as cofactor.

It localises to the cytoplasm. It carries out the reaction N(6)-carboxybiotinyl-L-lysyl-[protein] + acetyl-CoA = N(6)-biotinyl-L-lysyl-[protein] + malonyl-CoA. It participates in lipid metabolism; malonyl-CoA biosynthesis; malonyl-CoA from acetyl-CoA: step 1/1. Functionally, component of the acetyl coenzyme A carboxylase (ACC) complex. Biotin carboxylase (BC) catalyzes the carboxylation of biotin on its carrier protein (BCCP) and then the CO(2) group is transferred by the transcarboxylase to acetyl-CoA to form malonyl-CoA. This chain is Acetyl-coenzyme A carboxylase carboxyl transferase subunit beta, found in Alcanivorax borkumensis (strain ATCC 700651 / DSM 11573 / NCIMB 13689 / SK2).